Consider the following 76-residue polypeptide: Esculentin-2-ALb (76 aa).

The first 22 residues, 1 to 22 (MFTMKKSLLLLFFLGTISLSLC), serve as a signal peptide directing secretion. Positions 23 to 39 (EEERSADEDDGEKGVKR) are excised as a propeptide. A disulfide bridge links Cys-70 with Cys-76.

As to expression, expressed by the skin glands.

The protein resides in the secreted. Antimicrobial peptide with activity against Gram-positive and Gram-negative bacteria and against fungi. Has been tested against S.aureus (MIC=1.25 ug/mL), B.pumilus (MIC=2.5 ug/mL), B.cereus (MIC=7.5 ug/mL), E.coli (MIC=12.5 ug/mL), B.dysenteriae (MIC=7.5 ug/mL), A.cacoaceticus (MIC=12.5 ug/mL), P.aeruginosa (MIC=50.0 ug/mL) and C.albicans (MIC=2.5 ug/mL). Also shows a weak hemolytic activity. This chain is Esculentin-2-ALb, found in Amolops loloensis (Lolokou Sucker Frog).